The chain runs to 286 residues: Diaminopimelate epimerase (286 aa).

Positions 13 and 66 each coordinate substrate. Cysteine 75 acts as the Proton donor in catalysis. Residues 76–77 (GN), asparagine 165, asparagine 198, and 216–217 (ER) contribute to the substrate site. Cysteine 225 (proton acceptor) is an active-site residue. 226–227 (GT) is a substrate binding site.

The protein belongs to the diaminopimelate epimerase family. In terms of assembly, homodimer.

The protein resides in the cytoplasm. It carries out the reaction (2S,6S)-2,6-diaminopimelate = meso-2,6-diaminopimelate. It functions in the pathway amino-acid biosynthesis; L-lysine biosynthesis via DAP pathway; DL-2,6-diaminopimelate from LL-2,6-diaminopimelate: step 1/1. Catalyzes the stereoinversion of LL-2,6-diaminopimelate (L,L-DAP) to meso-diaminopimelate (meso-DAP), a precursor of L-lysine and an essential component of the bacterial peptidoglycan. The polypeptide is Diaminopimelate epimerase (Thermosynechococcus vestitus (strain NIES-2133 / IAM M-273 / BP-1)).